A 431-amino-acid chain; its full sequence is Eukaryotic translation initiation factor 5 (431 aa).

Ser-10 bears the Phosphoserine mark. Residue 27–34 coordinates GTP; it reads GKGNGIKT. The segment at 143–216 is disordered; it reads KNPPENSDSG…TTEEAQRRRM (74 aa). The segment covering 153–170 has biased composition (basic and acidic residues); that stretch reads TGKKEKEKKNRKGKDKEN. The segment covering 178 to 193 has biased composition (pro residues); that stretch reads TPPPPPPPNEISPPPH. The segment covering 196 to 209 has biased composition (acidic residues); that stretch reads EEEEDDDWGEDTTE. Thr-227 bears the Phosphothreonine mark. A phosphoserine mark is found at Ser-229, Ser-389, Ser-390, and Ser-410. A W2 domain is found at 233–392; it reads ERTIEERVNI…KEAEEESSGG (160 aa). Residues Lys-413 and Lys-418 each participate in a glycyl lysine isopeptide (Lys-Gly) (interchain with G-Cter in SUMO2) cross-link. Phosphoserine is present on Ser-419.

This sequence belongs to the eIF-2-beta/eIF-5 family. Component of the 43S pre-initiation complex (43S PIC), which is composed of the 40S ribosomal subunit, EIF1, eIF1A (EIF1AX), eIF3 complex, EIF5 and eIF2-GTP-initiator tRNA complex (eIF2 ternary complex). Interacts with eIF1A (EIF1AX) during scanning. Interacts through its C-terminal domain (CTD) with EIF1 or with eIF2-beta (EIF2S2) (mutually exclusive) through a common binding site. Interacts through its C-terminal domain (CTD) with the CTD of EIF5B. Interacts with FMR1 isoform 6; this interaction occurs in a RNA-dependent manner.

Its subcellular location is the cytoplasm. Its function is as follows. Component of the 43S pre-initiation complex (43S PIC), which binds to the mRNA cap-proximal region, scans mRNA 5'-untranslated region, and locates the initiation codon. In this complex, acts as a GTPase-activating protein, by promoting GTP hydrolysis by eIF2G (EIF2S3). During scanning, interacts with both EIF1 (via its C-terminal domain (CTD)) and EIF1A (via its NTD). This interaction with EIF1A contributes to the maintenance of EIF1 within the open 43S PIC. When start codon is recognized, EIF5, via its NTD, induces eIF2G (EIF2S3) to hydrolyze the GTP. Start codon recognition also induces a conformational change of the PIC to a closed state. This change increases the affinity of EIF5-CTD for EIF2-beta (EIF2S2), which allows the release, by an indirect mechanism, of EIF1 from the PIC. Finally, EIF5 stabilizes the PIC in its closed conformation. In Pongo abelii (Sumatran orangutan), this protein is Eukaryotic translation initiation factor 5 (EIF5).